A 221-amino-acid polypeptide reads, in one-letter code: Very-long-chain (3R)-3-hydroxyacyl-CoA dehydratase PASTICCINO 2A (221 aa).

Over 1–11 (MAGVGSAVRRL) the chain is Cytoplasmic. The chain crosses the membrane as a helical span at residues 12 to 32 (YLSVYNWAVFFGWAQVLYYAV). Over 33–51 (TTLLESGHEAVYAAVERPL) the chain is Lumenal. The helical transmembrane segment at 52-70 (QFAQTAAFLEILHGLVGLV) threads the bilayer. The Cytoplasmic segment spans residues 71 to 76 (RSPVSA). The helical transmembrane segment at 77–95 (TLPQIGSRLFLTWGILWSF) threads the bilayer. Residues 96 to 100 (PETHS) are Lumenal-facing. Residues 101 to 121 (HILVTSLVISWSITEIIRYSF) traverse the membrane as a helical segment. Over 122-141 (FGMKEAFGFAPSWLLWLRYS) the chain is Cytoplasmic. A helical membrane pass occupies residues 142–165 (TFMVLYPTGISSEVGLIYIALPYM). Residues Tyr147 and Glu154 contribute to the active site. Topologically, residues 166-184 (KASEKYCLRMPNKWNFSFD) are lumenal. The helical transmembrane segment at 185-209 (FFYASILSLAIYVPGSPHMFTYMLA) threads the bilayer. Over 210–221 (QRKKALAKAKAA) the chain is Cytoplasmic.

The protein belongs to the very long-chain fatty acids dehydratase HACD family.

Its subcellular location is the endoplasmic reticulum membrane. The catalysed reaction is a very-long-chain (3R)-3-hydroxyacyl-CoA = a very-long-chain (2E)-enoyl-CoA + H2O. Its pathway is lipid metabolism; fatty acid biosynthesis. In terms of biological role, catalyzes the third of the four reactions of the long-chain fatty acids elongation cycle. This endoplasmic reticulum-bound enzymatic process, allows the addition of two carbons to the chain of long- and very long-chain fatty acids/VLCFAs per cycle. This enzyme catalyzes the dehydration of the 3-hydroxyacyl-CoA intermediate into trans-2,3-enoyl-CoA, within each cycle of fatty acid elongation. Thereby, it participates in the production of VLCFAs of different chain lengths that are involved in multiple biological processes as precursors of membrane lipids and lipid mediators. May be an anti-phosphatase that prevents CDKA-1 dephosphorylation and activation. Involved in the hormonal control of cell division and differentiation. Required for proliferation control of meristematic and non-meristematic cells. Negative regulator of the cell cycle. This chain is Very-long-chain (3R)-3-hydroxyacyl-CoA dehydratase PASTICCINO 2A (PAS2A), found in Oryza sativa subsp. japonica (Rice).